We begin with the raw amino-acid sequence, 102 residues long: Integration host factor subunit alpha (102 aa).

It belongs to the bacterial histone-like protein family. As to quaternary structure, heterodimer of an alpha and a beta chain.

Its function is as follows. This protein is one of the two subunits of integration host factor, a specific DNA-binding protein that functions in genetic recombination as well as in transcriptional and translational control. The chain is Integration host factor subunit alpha from Paracoccus denitrificans (strain Pd 1222).